Reading from the N-terminus, the 213-residue chain is Histone H1.3 (213 aa).

The residue at position 1 (Ser1) is an N-acetylserine. Low complexity predominate over residues 1–15 (SEAPAETAAPAPAEK). The tract at residues 1–41 (SEAPAETAAPAPAEKSPAKKKKAAKKPGAGAAKRKAAGPPV) is disordered. Lys15 bears the N6-acetyllysine mark. N6-(beta-hydroxybutyryl)lysine is present on residues Lys35 and Lys53. The 74-residue stretch at 37–110 (AGPPVSELIT…GASGSFKLDK (74 aa)) folds into the H15 domain. Arg55 is modified (citrulline). Lys65, Lys86, and Lys91 each carry N6-(beta-hydroxybutyryl)lysine. A disordered region spans residues 92 to 213 (GTLVETKGTG…AKKTAAKKKK (122 aa)). Ser105 carries the post-translational modification Phosphoserine. Position 107 is an N6-(beta-hydroxybutyryl)lysine (Lys107). Residues 107 to 119 (KLDKKAASGEAKP) are compositionally biased toward basic and acidic residues. 3 stretches are compositionally biased toward basic residues: residues 120-131 (KPKKAGAAKPKK), 138-170 (KKPK…KVAK), and 179-213 (KSPK…KKKK).

The protein belongs to the histone H1/H5 family. In terms of processing, H1 histones are progressively phosphorylated during the cell cycle, becoming maximally phosphorylated during late G2 phase and M phase, and being dephosphorylated sharply thereafter. Citrullination at Arg-55 (H1R54ci) by PADI4 takes place within the DNA-binding site of H1 and results in its displacement from chromatin and global chromatin decondensation, thereby promoting pluripotency and stem cell maintenance.

Its subcellular location is the nucleus. It localises to the chromosome. In terms of biological role, histones H1 are necessary for the condensation of nucleosome chains into higher-order structures. In Oryctolagus cuniculus (Rabbit), this protein is Histone H1.3.